The chain runs to 1224 residues: Integrin alpha pat-2 (1224 aa).

The first 27 residues, Met-1–Ser-27, serve as a signal peptide directing secretion. Over Phe-28–Trp-1153 the chain is Extracellular. FG-GAP repeat units lie at residues Asn-29 to Glu-96, Asn-110 to Glu-173, Glu-180 to Pro-235, Asn-236 to Asn-292, Leu-293 to Tyr-347, Gly-364 to Glu-423, and Gln-427 to Ala-490. N-linked (GlcNAc...) asparagine glycosylation is found at Asn-74, Asn-110, Asn-230, and Asn-292. Asn-610 carries N-linked (GlcNAc...) asparagine glycosylation. Residues Arg-622–Asp-624 carry the Cell attachment site motif. Asn-681, Asn-775, and Asn-819 each carry an N-linked (GlcNAc...) asparagine glycan. 2 disordered regions span residues Leu-898–Gly-968 and Asp-981–Phe-1037. The span at Arg-920 to Thr-931 shows a compositional bias: acidic residues. Over residues Val-955–Arg-964 the composition is skewed to basic and acidic residues. Over residues Tyr-984–Phe-1003 the composition is skewed to acidic residues. Basic residues predominate over residues Ser-1008–Glu-1023. Residues Gly-1024 to Phe-1037 show a composition bias toward basic and acidic residues. Residues Trp-1154 to Leu-1174 form a helical membrane-spanning segment. At Trp-1175–Leu-1224 the chain is on the cytoplasmic side. The interval Ala-1190–Leu-1224 is disordered. A compositionally biased stretch (polar residues) spans Asp-1204–Leu-1224.

This sequence belongs to the integrin alpha chain family. As to quaternary structure, heterodimer of an alpha and a beta subunit. Alpha pat-2 associates with beta pat-3.

The protein resides in the membrane. In terms of biological role, required for muscle development probably through the regulation of the actin-myosin cytoskeleton. During the formation of neuromuscular junctions at the larval stage, negatively regulates membrane protrusion from body wall muscles, probably through lamins such as epi-1, lam-2 and unc-52. Required for distal tip cell migration and dorsal pathfinding. Required for egg-laying. May play a role in cell motility and cell-cell interactions. The chain is Integrin alpha pat-2 from Caenorhabditis briggsae.